The sequence spans 466 residues: 5-hydroxytryptamine receptor (466 aa).

The tract at residues 1–21 is disordered; that stretch reads MNASRLPGFNDTSQDQPYPTS. The Extracellular portion of the chain corresponds to 1–66; sequence MNASRLPGFN…TSFVLMAVTS (66 aa). 6 N-linked (GlcNAc...) asparagine glycosylation sites follow: asparagine 2, asparagine 10, asparagine 29, asparagine 41, asparagine 45, and asparagine 50. Polar residues predominate over residues 10-21; the sequence is NDTSQDQPYPTS. A helical membrane pass occupies residues 67-89; sequence VVLALIILATIVGNVFVIAAIII. Topologically, residues 90-99 are cytoplasmic; it reads ERNLQNVANY. A helical membrane pass occupies residues 100–121; sequence LVASLAVADLMVACLVMPLGAV. Residues 122 to 136 are Extracellular-facing; the sequence is YEVSQGWILGPELCD. The cysteines at positions 135 and 215 are disulfide-linked. Residues 137 to 158 form a helical membrane-spanning segment; that stretch reads MWTSSDVLCSSASILHLVAIAT. Residues 159-177 are Cytoplasmic-facing; sequence DRYWAVTDVDYIHIRNEKR. The helical transmembrane segment at 178 to 200 threads the bilayer; it reads IFTMIVLVWGAALVVSLAPQLGW. The Extracellular portion of the chain corresponds to 201–228; that stretch reads KDPDYLARITQQQKCLVSQDLAYQIFAT. A helical transmembrane segment spans residues 229–250; sequence MSTFYVPLAVILILYWKIFQTA. Topologically, residues 251–386 are cytoplasmic; that stretch reads RRRIRRRRDP…AKRERKAAKT (136 aa). Disordered stretches follow at residues 255 to 282 and 339 to 360; these read RRRR…QSAR and VPPS…KPER. A compositionally biased stretch (low complexity) spans 339-353; the sequence is VPPSVSPEKSSSTVT. Residues 387 to 410 form a helical membrane-spanning segment; that stretch reads LAIITGAFVFCWLPFFIMALVMPI. The Extracellular portion of the chain corresponds to 411-419; the sequence is CQTCVISDY. The helical transmembrane segment at 420-442 threads the bilayer; sequence LASFFLWLGYFNSTLNPVIYTIF. At 443 to 466 the chain is on the cytoplasmic side; sequence SPDFRQAFARILFGTHRRRRYKKF.

Belongs to the G-protein coupled receptor 1 family.

The protein resides in the cell membrane. Functionally, this is a receptor for 5-hydroxytryptamine (serotonin), a biogenic hormone that function as a neurotransmitter, a hormone, and a mitogen. This is 5-hydroxytryptamine receptor from Heliothis virescens (Tobacco budworm moth).